Consider the following 331-residue polypeptide: Glyceraldehyde-3-phosphate dehydrogenase 3 (331 aa).

Residues 11–12 (RI), aspartate 33, and glutamate 77 each bind NAD(+). Residue serine 148 is modified to Phosphoserine. D-glyceraldehyde 3-phosphate is bound at residue 148–150 (SCT). Residue cysteine 149 is the Nucleophile of the active site. Serine 177 bears the Phosphoserine mark. Threonine 179 serves as a coordination point for D-glyceraldehyde 3-phosphate. Residue serine 200 is modified to Phosphoserine. D-glyceraldehyde 3-phosphate is bound by residues 208–209 (TG) and arginine 231. Asparagine 313 contributes to the NAD(+) binding site.

It belongs to the glyceraldehyde-3-phosphate dehydrogenase family. As to quaternary structure, homotetramer.

The protein localises to the cytoplasm. The catalysed reaction is D-glyceraldehyde 3-phosphate + phosphate + NAD(+) = (2R)-3-phospho-glyceroyl phosphate + NADH + H(+). The protein operates within carbohydrate degradation; glycolysis; pyruvate from D-glyceraldehyde 3-phosphate: step 1/5. The protein is Glyceraldehyde-3-phosphate dehydrogenase 3 of Kluyveromyces marxianus (Yeast).